A 234-amino-acid polypeptide reads, in one-letter code: Covalently-linked cell wall protein 14 (234 aa).

Residues 1 to 22 (MASFLKISTLIAIVSTLQTTLA) form the signal peptide. The CFEM domain occupies 23-109 (APPACLLACV…SSEESSASAS (87 aa)). Disulfide bonds link Cys27-Cys66, Cys31-Cys61, Cys41-Cys49, and Cys51-Cys82. Asp46 contributes to the heme binding site. The span at 86-207 (SSQSSSSESE…ASSSESTTAT (122 aa)) shows a compositional bias: low complexity. A disordered region spans residues 86-208 (SSQSSSSESE…SSSESTTATG (123 aa)). Gly215 carries the GPI-anchor amidated glycine lipid modification. Positions 216–234 (SAAKVGLGALVGLVGAVLL) are cleaved as a propeptide — removed in mature form.

The protein belongs to the CCW14 family. Post-translationally, the GPI-anchor is attached to the protein in the endoplasmic reticulum and serves to target the protein to the cell surface. There, the glucosamine-inositol phospholipid moiety is cleaved off and the GPI-modified mannoprotein is covalently attached via its lipidless GPI glycan remnant to the 1,6-beta-glucan of the outer cell wall layer.

It is found in the secreted. Its subcellular location is the cell wall. The protein localises to the membrane. In terms of biological role, beta-glucan associated cell wall protein involved in cell wall structure. May serve as cross-linking or coat-forming wall protein. The chain is Covalently-linked cell wall protein 14 (SSR1) from Candida albicans (strain SC5314 / ATCC MYA-2876) (Yeast).